The primary structure comprises 481 residues: tRNA pseudouridine(38/39) synthase (481 aa).

At A2 the chain carries N-acetylalanine. The span at 29–40 (KKEQANNKDSNI) shows a compositional bias: basic and acidic residues. The tract at residues 29–54 (KKEQANNKDSNIRENSSGAGGKPKRA) is disordered. Catalysis depends on D118, which acts as the Nucleophile. Y195 serves as a coordination point for substrate. T456 carries the phosphothreonine modification.

The protein belongs to the tRNA pseudouridine synthase TruA family.

Its subcellular location is the nucleus. It catalyses the reaction uridine(38/39) in tRNA = pseudouridine(38/39) in tRNA. Formation of pseudouridine at position 39 in the anticodon stem and loop of transfer RNAs. In Bos taurus (Bovine), this protein is tRNA pseudouridine(38/39) synthase (PUS3).